The sequence spans 385 residues: Histidinol-phosphate aminotransferase (385 aa).

N6-(pyridoxal phosphate)lysine is present on Lys-235.

The protein belongs to the class-II pyridoxal-phosphate-dependent aminotransferase family. Histidinol-phosphate aminotransferase subfamily. As to quaternary structure, homodimer. Pyridoxal 5'-phosphate serves as cofactor.

The enzyme catalyses L-histidinol phosphate + 2-oxoglutarate = 3-(imidazol-4-yl)-2-oxopropyl phosphate + L-glutamate. The protein operates within amino-acid biosynthesis; L-histidine biosynthesis; L-histidine from 5-phospho-alpha-D-ribose 1-diphosphate: step 7/9. This is Histidinol-phosphate aminotransferase from Nocardia farcinica (strain IFM 10152).